A 486-amino-acid chain; its full sequence is Probable glycine dehydrogenase (decarboxylating) subunit 2 (486 aa).

K269 carries the N6-(pyridoxal phosphate)lysine modification.

Belongs to the GcvP family. C-terminal subunit subfamily. The glycine cleavage system is composed of four proteins: P, T, L and H. In this organism, the P 'protein' is a heterodimer of two subunits. It depends on pyridoxal 5'-phosphate as a cofactor.

It carries out the reaction N(6)-[(R)-lipoyl]-L-lysyl-[glycine-cleavage complex H protein] + glycine + H(+) = N(6)-[(R)-S(8)-aminomethyldihydrolipoyl]-L-lysyl-[glycine-cleavage complex H protein] + CO2. Functionally, the glycine cleavage system catalyzes the degradation of glycine. The P protein binds the alpha-amino group of glycine through its pyridoxal phosphate cofactor; CO(2) is released and the remaining methylamine moiety is then transferred to the lipoamide cofactor of the H protein. The protein is Probable glycine dehydrogenase (decarboxylating) subunit 2 of Chlorobium phaeobacteroides (strain DSM 266 / SMG 266 / 2430).